An 886-amino-acid chain; its full sequence is Alanine--tRNA ligase (886 aa).

Residues H564, H568, C666, and H670 each contribute to the Zn(2+) site.

Belongs to the class-II aminoacyl-tRNA synthetase family. Requires Zn(2+) as cofactor.

It is found in the cytoplasm. It carries out the reaction tRNA(Ala) + L-alanine + ATP = L-alanyl-tRNA(Ala) + AMP + diphosphate. Functionally, catalyzes the attachment of alanine to tRNA(Ala) in a two-step reaction: alanine is first activated by ATP to form Ala-AMP and then transferred to the acceptor end of tRNA(Ala). Also edits incorrectly charged Ser-tRNA(Ala) and Gly-tRNA(Ala) via its editing domain. This is Alanine--tRNA ligase from Prochlorococcus marinus subsp. pastoris (strain CCMP1986 / NIES-2087 / MED4).